Here is a 240-residue protein sequence, read N- to C-terminus: Tetrahydromethanopterin S-methyltransferase subunit A (240 aa).

Residues 1 to 216 lie on the Cytoplasmic side of the membrane; it reads MADKKAPASG…DAALIAKFNS (216 aa). His85 is a 5-hydroxybenzimidazolylcob(I)amide binding site. A helical membrane pass occupies residues 217–234; sequence GYYNGKIQGIAIGLFLSL. Residues 235 to 240 are Extracellular-facing; that stretch reads LIFSLL.

The protein belongs to the MtrA family. In terms of assembly, the complex is composed of 8 subunits; MtrA, MtrB, MtrC, MtrD, MtrE, MtrF, MtrG and MtrH. 5-hydroxybenzimidazolylcob(I)amide is required as a cofactor.

The protein resides in the cell membrane. It carries out the reaction 5-methyl-5,6,7,8-tetrahydromethanopterin + coenzyme M + 2 Na(+)(in) = 5,6,7,8-tetrahydromethanopterin + methyl-coenzyme M + 2 Na(+)(out). It participates in one-carbon metabolism; methanogenesis from CO(2); methyl-coenzyme M from 5,10-methylene-5,6,7,8-tetrahydromethanopterin: step 2/2. Part of a complex that catalyzes the formation of methyl-coenzyme M and tetrahydromethanopterin from coenzyme M and methyl-tetrahydromethanopterin. This is an energy-conserving, sodium-ion translocating step. The sequence is that of Tetrahydromethanopterin S-methyltransferase subunit A from Methanococcus aeolicus (strain ATCC BAA-1280 / DSM 17508 / OCM 812 / Nankai-3).